Here is a 289-residue protein sequence, read N- to C-terminus: Esterase GA18864 (289 aa).

The segment covering 1-19 (MTNNDAAVEAPSSSRASSS) has biased composition (low complexity). Positions 1–24 (MTNNDAAVEAPSSSRASSSKQQPK) are disordered. Active-site charge relay system residues include serine 133, aspartate 191, and histidine 218. The interval 253–289 (VSFIESGAEDNDDDGDANDAEVAAATAAAGSDLDDSD) is disordered. The span at 259–271 (GAEDNDDDGDAND) shows a compositional bias: acidic residues. The segment covering 272 to 283 (AEVAAATAAAGS) has biased composition (low complexity).

It belongs to the LovG family.

This Drosophila pseudoobscura pseudoobscura (Fruit fly) protein is Esterase GA18864.